The sequence spans 137 residues: S-adenosylmethionine decarboxylase proenzyme (137 aa).

Ser-63 acts as the Schiff-base intermediate with substrate; via pyruvic acid in catalysis. Position 63 is a pyruvic acid (Ser); by autocatalysis (Ser-63). Residue His-68 is the Proton acceptor; for processing activity of the active site. The active-site Proton donor; for catalytic activity is Cys-83.

It belongs to the prokaryotic AdoMetDC family. Type 1 subfamily. In terms of assembly, heterotetramer of two alpha and two beta chains arranged as a dimer of alpha/beta heterodimers. Requires pyruvate as cofactor. Is synthesized initially as an inactive proenzyme. Formation of the active enzyme involves a self-maturation process in which the active site pyruvoyl group is generated from an internal serine residue via an autocatalytic post-translational modification. Two non-identical subunits are generated from the proenzyme in this reaction, and the pyruvate is formed at the N-terminus of the alpha chain, which is derived from the carboxyl end of the proenzyme. The post-translation cleavage follows an unusual pathway, termed non-hydrolytic serinolysis, in which the side chain hydroxyl group of the serine supplies its oxygen atom to form the C-terminus of the beta chain, while the remainder of the serine residue undergoes an oxidative deamination to produce ammonia and the pyruvoyl group blocking the N-terminus of the alpha chain.

The enzyme catalyses S-adenosyl-L-methionine + H(+) = S-adenosyl 3-(methylsulfanyl)propylamine + CO2. The protein operates within amine and polyamine biosynthesis; S-adenosylmethioninamine biosynthesis; S-adenosylmethioninamine from S-adenosyl-L-methionine: step 1/1. In terms of biological role, catalyzes the decarboxylation of S-adenosylmethionine to S-adenosylmethioninamine (dcAdoMet), the propylamine donor required for the synthesis of the polyamines spermine and spermidine from the diamine putrescine. The polypeptide is S-adenosylmethionine decarboxylase proenzyme (Fervidobacterium nodosum (strain ATCC 35602 / DSM 5306 / Rt17-B1)).